The primary structure comprises 235 residues: Leucyl/phenylalanyl-tRNA--protein transferase (235 aa).

Belongs to the L/F-transferase family.

The protein localises to the cytoplasm. The catalysed reaction is N-terminal L-lysyl-[protein] + L-leucyl-tRNA(Leu) = N-terminal L-leucyl-L-lysyl-[protein] + tRNA(Leu) + H(+). The enzyme catalyses N-terminal L-arginyl-[protein] + L-leucyl-tRNA(Leu) = N-terminal L-leucyl-L-arginyl-[protein] + tRNA(Leu) + H(+). It carries out the reaction L-phenylalanyl-tRNA(Phe) + an N-terminal L-alpha-aminoacyl-[protein] = an N-terminal L-phenylalanyl-L-alpha-aminoacyl-[protein] + tRNA(Phe). Its function is as follows. Functions in the N-end rule pathway of protein degradation where it conjugates Leu, Phe and, less efficiently, Met from aminoacyl-tRNAs to the N-termini of proteins containing an N-terminal arginine or lysine. This chain is Leucyl/phenylalanyl-tRNA--protein transferase, found in Aeromonas hydrophila subsp. hydrophila (strain ATCC 7966 / DSM 30187 / BCRC 13018 / CCUG 14551 / JCM 1027 / KCTC 2358 / NCIMB 9240 / NCTC 8049).